A 430-amino-acid polypeptide reads, in one-letter code: MKPSLLCRPLSCFLMLLPWPLATLTSTTLWQCPPGEEPDLDPGQGTLCRPCPPGTFSAAWGSSPCQPHARCSLWRRLEAQVGMATRDTLCGDCWPGWFGPWGVPRVPCQPCSWAPLGTHGCDEWGRRARRGVEVAAGASSGGETRQPGNGTRAGGPEETAAQYAVIAIVPVFCLMGLLGILVCNLLKRKGYHCTAHKEVGPGPGGGGSGINPAYRTEDANEDTIGVLVRLITEKKENAAALEELLKEYHSKQLVQTSHRPVSKLPPAPPNVPHICPHRHHLHTVQGLASLSGPCCSRCSQKKWPEVLLSPEAVAATTPVPSLLPNPTRVPKAGAKAGRQGEITILSVGRFRVARIPEQRTSSMVSEVKTITEAGPSWGDLPDSPQPGLPPEQQALLGSGGSRTKWLKPPAENKAEENRYVVRLSESNLVI.

The signal sequence occupies residues 1–25 (MKPSLLCRPLSCFLMLLPWPLATLT). At 26 to 162 (STTLWQCPPG…AGGPEETAAQ (137 aa)) the chain is on the extracellular side. Residues 50-90 (PCPPGTFSAAWGSSPCQPHARCSLWRRLEAQVGMATRDTLC) form a TNFR-Cys repeat. 2 disulfide bridges follow: cysteine 51/cysteine 65 and cysteine 71/cysteine 90. Residues 134–143 (VAAGASSGGE) are compositionally biased toward low complexity. Residues 134–156 (VAAGASSGGETRQPGNGTRAGGP) form a disordered region. N-linked (GlcNAc...) asparagine glycosylation occurs at asparagine 149. The helical transmembrane segment at 163–183 (YAVIAIVPVFCLMGLLGILVC) threads the bilayer. Over 184–430 (NLLKRKGYHC…VRLSESNLVI (247 aa)) the chain is Cytoplasmic. Phosphothreonine is present on threonine 223. The short motif at 349-352 (RFRV) is the RFRV motif; mediates interaction with STK39 element. Positions 373-410 (AGPSWGDLPDSPQPGLPPEQQALLGSGGSRTKWLKPPA) are disordered.

The protein belongs to the RELT family. In terms of assembly, interacts with TRAF1. Interacts with RELL1, RELL2 and OXSR1. Interacts with PLSCR1. Interacts with STK39. Post-translationally, phosphorylated in vitro by OXSR1. Phosphorylated by STK39. Spleen, lymph node, brain, breast and peripheral blood leukocytes (at protein level). Expressed highly in bone marrow and fetal liver. Very low levels in skeletal muscle, testis and colon. Not detected in kidney and pancreas.

It localises to the cell membrane. The protein localises to the cytoplasm. It is found in the perinuclear region. Functionally, may play a role in apoptosis. Induces activation of MAPK14/p38 and MAPK8/JNK MAPK cascades, when overexpressed. Involved in dental enamel formation. The chain is Tumor necrosis factor receptor superfamily member 19L (RELT) from Homo sapiens (Human).